Here is a 149-residue protein sequence, read N- to C-terminus: L-alanine exporter AlaE (149 aa).

The next 4 membrane-spanning stretches (helical) occupy residues 16–36 (FAMVVYCSVVNMLIEIFLSGM), 46–66 (LVAIPVNILIAWPYGMYRDAI), 85–105 (VLAYVTFQSPVYVAILLTVGA), and 112–132 (AAVSSNIVISMLMGAVYGYFL).

Belongs to the AlaE exporter family.

It is found in the cell inner membrane. Functionally, exports L-alanine. In Citrobacter koseri (strain ATCC BAA-895 / CDC 4225-83 / SGSC4696), this protein is L-alanine exporter AlaE.